The chain runs to 410 residues: Adenosylhomocysteinase (410 aa).

Asp117 and Glu142 together coordinate substrate. 143-145 is an NAD(+) binding site; that stretch reads TTT. The substrate site is built by Lys172 and Asp176. Residues Asn177, 206–211, Glu229, 285–287, and Asn332 contribute to the NAD(+) site; these read GYGYCG and AGH.

This sequence belongs to the adenosylhomocysteinase family. Requires NAD(+) as cofactor.

The protein localises to the cytoplasm. It carries out the reaction S-adenosyl-L-homocysteine + H2O = L-homocysteine + adenosine. Its pathway is amino-acid biosynthesis; L-homocysteine biosynthesis; L-homocysteine from S-adenosyl-L-homocysteine: step 1/1. Functionally, may play a key role in the regulation of the intracellular concentration of adenosylhomocysteine. The polypeptide is Adenosylhomocysteinase (Thermoplasma acidophilum (strain ATCC 25905 / DSM 1728 / JCM 9062 / NBRC 15155 / AMRC-C165)).